The primary structure comprises 227 residues: Cytochrome c oxidase subunit 2 (227 aa).

Topologically, residues 1 to 14 (MAYPFQLGLQDATS) are mitochondrial intermembrane. A helical membrane pass occupies residues 15–45 (PIMEELLHFHDHTLMIVFLISSLVLYIISLM). Topologically, residues 46-59 (LTTKLTHTSTMDAQ) are mitochondrial matrix. The chain crosses the membrane as a helical span at residues 60–87 (EVETVWTILPAIILILIALPSLRILYMM). The Mitochondrial intermembrane segment spans residues 88–227 (DEINNPSLTV…YFETWSAVMV (140 aa)). Cu cation contacts are provided by His-161, Cys-196, Glu-198, Cys-200, His-204, and Met-207. Mg(2+) is bound at residue Glu-198. A Phosphotyrosine modification is found at Tyr-218.

The protein belongs to the cytochrome c oxidase subunit 2 family. In terms of assembly, component of the cytochrome c oxidase (complex IV, CIV), a multisubunit enzyme composed of 14 subunits. The complex is composed of a catalytic core of 3 subunits MT-CO1, MT-CO2 and MT-CO3, encoded in the mitochondrial DNA, and 11 supernumerary subunits COX4I, COX5A, COX5B, COX6A, COX6B, COX6C, COX7A, COX7B, COX7C, COX8 and NDUFA4, which are encoded in the nuclear genome. The complex exists as a monomer or a dimer and forms supercomplexes (SCs) in the inner mitochondrial membrane with NADH-ubiquinone oxidoreductase (complex I, CI) and ubiquinol-cytochrome c oxidoreductase (cytochrome b-c1 complex, complex III, CIII), resulting in different assemblies (supercomplex SCI(1)III(2)IV(1) and megacomplex MCI(2)III(2)IV(2)). Found in a complex with TMEM177, COA6, COX18, COX20, SCO1 and SCO2. Interacts with TMEM177 in a COX20-dependent manner. Interacts with COX20. Interacts with COX16. Cu cation is required as a cofactor.

The protein resides in the mitochondrion inner membrane. The catalysed reaction is 4 Fe(II)-[cytochrome c] + O2 + 8 H(+)(in) = 4 Fe(III)-[cytochrome c] + 2 H2O + 4 H(+)(out). Component of the cytochrome c oxidase, the last enzyme in the mitochondrial electron transport chain which drives oxidative phosphorylation. The respiratory chain contains 3 multisubunit complexes succinate dehydrogenase (complex II, CII), ubiquinol-cytochrome c oxidoreductase (cytochrome b-c1 complex, complex III, CIII) and cytochrome c oxidase (complex IV, CIV), that cooperate to transfer electrons derived from NADH and succinate to molecular oxygen, creating an electrochemical gradient over the inner membrane that drives transmembrane transport and the ATP synthase. Cytochrome c oxidase is the component of the respiratory chain that catalyzes the reduction of oxygen to water. Electrons originating from reduced cytochrome c in the intermembrane space (IMS) are transferred via the dinuclear copper A center (CU(A)) of subunit 2 and heme A of subunit 1 to the active site in subunit 1, a binuclear center (BNC) formed by heme A3 and copper B (CU(B)). The BNC reduces molecular oxygen to 2 water molecules using 4 electrons from cytochrome c in the IMS and 4 protons from the mitochondrial matrix. This Lycalopex vetulus (Hoary fox) protein is Cytochrome c oxidase subunit 2 (MT-CO2).